The primary structure comprises 538 residues: Putative cysteine ligase BshC (538 aa).

Positions 248 to 268 (ISKYKEVQEGLRNQQEVIKEL) form a coiled coil.

It belongs to the BshC family.

Its function is as follows. Involved in bacillithiol (BSH) biosynthesis. May catalyze the last step of the pathway, the addition of cysteine to glucosamine malate (GlcN-Mal) to generate BSH. This is Putative cysteine ligase BshC from Bacillus cereus (strain ATCC 14579 / DSM 31 / CCUG 7414 / JCM 2152 / NBRC 15305 / NCIMB 9373 / NCTC 2599 / NRRL B-3711).